A 300-amino-acid chain; its full sequence is Ribosomal protein L11 methyltransferase (300 aa).

S-adenosyl-L-methionine contacts are provided by Thr-152, Gly-173, Asp-195, and Asn-234.

Belongs to the methyltransferase superfamily. PrmA family.

The protein resides in the cytoplasm. The enzyme catalyses L-lysyl-[protein] + 3 S-adenosyl-L-methionine = N(6),N(6),N(6)-trimethyl-L-lysyl-[protein] + 3 S-adenosyl-L-homocysteine + 3 H(+). Functionally, methylates ribosomal protein L11. The protein is Ribosomal protein L11 methyltransferase of Burkholderia ambifaria (strain ATCC BAA-244 / DSM 16087 / CCUG 44356 / LMG 19182 / AMMD) (Burkholderia cepacia (strain AMMD)).